The sequence spans 270 residues: Urease accessory protein UreD (270 aa).

This sequence belongs to the UreD family. As to quaternary structure, ureD, UreF and UreG form a complex that acts as a GTP-hydrolysis-dependent molecular chaperone, activating the urease apoprotein by helping to assemble the nickel containing metallocenter of UreC. The UreE protein probably delivers the nickel.

It localises to the cytoplasm. Required for maturation of urease via the functional incorporation of the urease nickel metallocenter. The chain is Urease accessory protein UreD from Microcystis aeruginosa (strain NIES-843 / IAM M-2473).